Consider the following 136-residue polypeptide: Immunoglobulin J chain (136 aa).

3 cysteine pairs are disulfide-bonded: C12/C100, C71/C91, and C108/C133. N-linked (GlcNAc...) (complex) asparagine glycosylation occurs at N48.

As to quaternary structure, part of the secretory IgA (sIgA) complex that consists of two, four or five IgA monomers, and two additional non-Ig polypeptides, namely the JCHAIN and the secretory component (the proteolytic product of PIGR). Part of the secretory IgM (sIgM) complex that consist of five IgM monomers, and two additional non-Ig polypeptides, namely the JCHAIN and the secretory component (the proteolytic product of PIGR). JCHAIN-containing IgM interacts (via CH4 domain) with FCRM (via Ig-like domain).

It localises to the secreted. Its function is as follows. Serves to link two monomer units of either IgM or IgA. In the case of IgM, the J chain-joined dimer is a nucleating unit for the IgM pentamer, and in the case of IgA it induces dimers and/or larger polymers. It also helps to bind these immunoglobulins to secretory component. The chain is Immunoglobulin J chain from Oryctolagus cuniculus (Rabbit).